Here is a 226-residue protein sequence, read N- to C-terminus: CRISPR-associated protein Cas5 (226 aa).

This sequence belongs to the CRISPR-associated protein Cas5 family. Subtype I-A/Apern subfamily. As to quaternary structure, can form a Cascade complex with Csa5, Cas7, Cas3, Cas3' and Cas8a2.

Functionally, CRISPR (clustered regularly interspaced short palindromic repeat) is an adaptive immune system that provides protection against mobile genetic elements (viruses, transposable elements and conjugative plasmids). CRISPR clusters contain spacers, sequences complementary to antecedent mobile elements, and target invading nucleic acids. CRISPR clusters are transcribed and processed into CRISPR RNA (crRNA). This Thermoproteus tenax (strain ATCC 35583 / DSM 2078 / JCM 9277 / NBRC 100435 / Kra 1) protein is CRISPR-associated protein Cas5 (cas5a).